The primary structure comprises 843 residues: Complement component C7 (843 aa).

Residues 1–22 form the signal peptide; it reads MKAMSLVFLVGLIGEFQVFSSA. In terms of domain architecture, TSP type-1 1 spans 27–80; it reads NCQWDSYAPWSECNGCTKTQTRRRPVAVYGQYGGHPCVGSTFETQSCEPTRGCP. Disulfide bonds link Cys28–Cys63, Cys39–Cys73, Cys42–Cys79, Cys85–Cys96, Cys91–Cys109, Cys103–Cys119, and Cys128–Cys165. Trp36 is a glycosylation site (C-linked (Man) tryptophan). An LDL-receptor class A domain is found at 83–121; sequence EGCGERFRCFSGQCISKSLVCNGDSDCEEDSADEDRCED. Residues 105–142 form a disordered region; that stretch reads GDSDCEEDSADEDRCEDSESRPSCDLSKPPPNIELTGN. The segment covering 107 to 120 has biased composition (acidic residues); the sequence is SDCEEDSADEDRCE. One can recognise an MACPF domain in the interval 124-456; sequence SRPSCDLSKP…EYLDEFDSCH (333 aa). A glycan (N-linked (GlcNAc...) asparagine) is linked at Asn202. Intrachain disulfides connect Cys337–Cys353, Cys433–Cys560, Cys455–Cys505, Cys457–Cys473, Cys460–Cys475, Cys477–Cys486, Cys512–Cys545, Cys523–Cys535, Cys571–Cys613, Cys599–Cys626, Cys631–Cys673, Cys659–Cys688, Cys702–Cys713, Cys715–Cys750, Cys721–Cys743, Cys728–Cys763, Cys773–Cys782, Cys776–Cys789, Cys791–Cys825, Cys797–Cys818, and Cys805–Cys838. In terms of domain architecture, EGF-like spans 457-487; sequence CQPCQNGGMASVEGTQCQCHCKPNTFGVACE. Residues 500–549 form the TSP type-1 2 domain; sequence DGGWSCWSSWGPCAQGKKTRSRKCNNPPPSGGGKSCIGETSESRQCEDED. C-linked (Man) tryptophan glycans are attached at residues Trp503, Trp506, and Trp509. Positions 516 to 539 are disordered; sequence KKTRSRKCNNPPPSGGGKSCIGET. CCP regions lie at residues 545-615 and 616-693; these read CEDE…RCGE and DLQW…RKEA. Sushi domains are found at residues 569 to 628 and 629 to 690; these read EFCP…HCQK and IACV…QCVR. Factor I module (FIM) regions lie at residues 695 to 770 and 771 to 843; these read LAKK…GSAE and KACG…PEAP. A glycan (N-linked (GlcNAc...) asparagine) is linked at Asn754.

This sequence belongs to the complement C6/C7/C8/C9 family. Monomer or dimer; as a C5b-7 complex it can also form multimeric rosettes. Component of the membrane attack complex (MAC), composed of complement C5b, C6, C7, C8A, C8B, C8G and multiple copies of the pore-forming subunit C9. C-, N- and O-glycosylated. O-glycosylated with core 1 or possibly core 8 glycans. As to expression, detected in plasma (at protein level). Bone marrow, heart, intestine, lung, spleen, kidney, liver and thymus.

It is found in the secreted. The protein resides in the target cell membrane. Membrane attack complex (MAC) assembly is inhibited by CD59, thereby protecting self-cells from damage during complement activation. MAC assembly is also inhibited by clusterin (CLU) chaperones that inhibit polymerization of C9. Its function is as follows. Component of the membrane attack complex (MAC), a multiprotein complex activated by the complement cascade, which inserts into a target cell membrane and forms a pore, leading to target cell membrane rupture and cell lysis. The MAC is initiated by proteolytic cleavage of C5 into complement C5b in response to the classical, alternative, lectin and GZMK complement pathways. The complement pathways consist in a cascade of proteins that leads to phagocytosis and breakdown of pathogens and signaling that strengthens the adaptive immune system. C7 serves as a membrane anchor. During MAC assembly, associates with C5b and C6 to form the C5b-7 complex, a key lipophilic precursor of the MAC complex, which associates with the outer leaflet and reduces the energy for membrane bending. This Sus scrofa (Pig) protein is Complement component C7 (C7).